A 338-amino-acid polypeptide reads, in one-letter code: Holliday junction branch migration complex subunit RuvB (338 aa).

The large ATPase domain (RuvB-L) stretch occupies residues 1 to 181 (MERAITPEKR…FGVISRLEFY (181 aa)). Residues Leu-20, Arg-21, Gly-62, Lys-65, Thr-66, Thr-67, 128–130 (EDF), Arg-171, Tyr-181, and Arg-218 each bind ATP. Thr-66 is a binding site for Mg(2+). The interval 182–252 (THDELAFIVT…VVQETLRLLE (71 aa)) is small ATPAse domain (RuvB-S). Residues 255–338 (EMGFDQMDRM…TPERPQGSLF (84 aa)) are head domain (RuvB-H). DNA-binding residues include Arg-310 and Arg-315.

The protein belongs to the RuvB family. Homohexamer. Forms an RuvA(8)-RuvB(12)-Holliday junction (HJ) complex. HJ DNA is sandwiched between 2 RuvA tetramers; dsDNA enters through RuvA and exits via RuvB. An RuvB hexamer assembles on each DNA strand where it exits the tetramer. Each RuvB hexamer is contacted by two RuvA subunits (via domain III) on 2 adjacent RuvB subunits; this complex drives branch migration. In the full resolvosome a probable DNA-RuvA(4)-RuvB(12)-RuvC(2) complex forms which resolves the HJ.

It localises to the cytoplasm. It catalyses the reaction ATP + H2O = ADP + phosphate + H(+). In terms of biological role, the RuvA-RuvB-RuvC complex processes Holliday junction (HJ) DNA during genetic recombination and DNA repair, while the RuvA-RuvB complex plays an important role in the rescue of blocked DNA replication forks via replication fork reversal (RFR). RuvA specifically binds to HJ cruciform DNA, conferring on it an open structure. The RuvB hexamer acts as an ATP-dependent pump, pulling dsDNA into and through the RuvAB complex. RuvB forms 2 homohexamers on either side of HJ DNA bound by 1 or 2 RuvA tetramers; 4 subunits per hexamer contact DNA at a time. Coordinated motions by a converter formed by DNA-disengaged RuvB subunits stimulates ATP hydrolysis and nucleotide exchange. Immobilization of the converter enables RuvB to convert the ATP-contained energy into a lever motion, pulling 2 nucleotides of DNA out of the RuvA tetramer per ATP hydrolyzed, thus driving DNA branch migration. The RuvB motors rotate together with the DNA substrate, which together with the progressing nucleotide cycle form the mechanistic basis for DNA recombination by continuous HJ branch migration. Branch migration allows RuvC to scan DNA until it finds its consensus sequence, where it cleaves and resolves cruciform DNA. The protein is Holliday junction branch migration complex subunit RuvB of Trichlorobacter lovleyi (strain ATCC BAA-1151 / DSM 17278 / SZ) (Geobacter lovleyi).